Consider the following 573-residue polypeptide: Proline--tRNA ligase (573 aa).

Belongs to the class-II aminoacyl-tRNA synthetase family. ProS type 1 subfamily. Homodimer.

Its subcellular location is the cytoplasm. It carries out the reaction tRNA(Pro) + L-proline + ATP = L-prolyl-tRNA(Pro) + AMP + diphosphate. In terms of biological role, catalyzes the attachment of proline to tRNA(Pro) in a two-step reaction: proline is first activated by ATP to form Pro-AMP and then transferred to the acceptor end of tRNA(Pro). As ProRS can inadvertently accommodate and process non-cognate amino acids such as alanine and cysteine, to avoid such errors it has two additional distinct editing activities against alanine. One activity is designated as 'pretransfer' editing and involves the tRNA(Pro)-independent hydrolysis of activated Ala-AMP. The other activity is designated 'posttransfer' editing and involves deacylation of mischarged Ala-tRNA(Pro). The misacylated Cys-tRNA(Pro) is not edited by ProRS. In Moorella thermoacetica (strain ATCC 39073 / JCM 9320), this protein is Proline--tRNA ligase.